Reading from the N-terminus, the 170-residue chain is Copper transporter 1 (170 aa).

Residues 1-29 are disordered; sequence MDHDHMHGMPRPSSSSSSSPSSMMNNGSM. Low complexity predominate over residues 9-29; it reads MPRPSSSSSSSPSSMMNNGSM. 2 consecutive transmembrane segments (helical) span residues 65–85 and 114–134; these read GMYA…EWLA and IGLA…VFLV.

The protein belongs to the copper transporter (Ctr) (TC 1.A.56) family. SLC31A subfamily. As to expression, expressed in the root apex, lateral root primordia, embryo, trichomes, guard cells and pollen grains.

It localises to the membrane. Functionally, copper transporter involved in copper acquisition and transport in leaves. Required for copper homeostasis and normal plant growth and development. The polypeptide is Copper transporter 1 (COPT1) (Arabidopsis thaliana (Mouse-ear cress)).